Here is a 1386-residue protein sequence, read N- to C-terminus: DNA-directed RNA polymerase subunit beta'' (1386 aa).

The Zn(2+) site is built by C224, C294, C301, and C304.

It belongs to the RNA polymerase beta' chain family. RpoC2 subfamily. In plastids the minimal PEP RNA polymerase catalytic core is composed of four subunits: alpha, beta, beta', and beta''. When a (nuclear-encoded) sigma factor is associated with the core the holoenzyme is formed, which can initiate transcription. Requires Zn(2+) as cofactor.

It localises to the plastid. Its subcellular location is the chloroplast. The enzyme catalyses RNA(n) + a ribonucleoside 5'-triphosphate = RNA(n+1) + diphosphate. In terms of biological role, DNA-dependent RNA polymerase catalyzes the transcription of DNA into RNA using the four ribonucleoside triphosphates as substrates. In Acorus calamus (Sweet flag), this protein is DNA-directed RNA polymerase subunit beta''.